The primary structure comprises 152 residues: Transcriptional regulator MraZ (152 aa).

2 consecutive SpoVT-AbrB domains span residues 5–52 and 81–124; these read ATLV…PLPE and ASEC…DETT.

Belongs to the MraZ family. Forms oligomers.

It is found in the cytoplasm. Its subcellular location is the nucleoid. Functionally, negatively regulates its own expression and that of the subsequent genes in the proximal part of the division and cell wall (dcw) gene cluster. Acts by binding directly to DNA. May also regulate the expression of genes outside the dcw cluster. The sequence is that of Transcriptional regulator MraZ from Salmonella typhi.